The sequence spans 359 residues: Fructose-bisphosphate aldolase class 2 (359 aa).

N6-acetyllysine is present on lysine 9. Residue serine 62 participates in D-glyceraldehyde 3-phosphate binding. Residue aspartate 110 is the Proton donor of the active site. Zn(2+)-binding residues include histidine 111, aspartate 145, glutamate 175, and histidine 227. Residue glycine 228 participates in dihydroxyacetone phosphate binding. Zn(2+) is bound at residue histidine 265. Residues 266-268 and 287-290 contribute to the dihydroxyacetone phosphate site; these read GGS and NIDT.

It belongs to the class II fructose-bisphosphate aldolase family. Homodimer. Zn(2+) is required as a cofactor.

It catalyses the reaction beta-D-fructose 1,6-bisphosphate = D-glyceraldehyde 3-phosphate + dihydroxyacetone phosphate. It functions in the pathway carbohydrate degradation; glycolysis; D-glyceraldehyde 3-phosphate and glycerone phosphate from D-glucose: step 4/4. Its function is as follows. Catalyzes the aldol condensation of dihydroxyacetone phosphate (DHAP or glycerone-phosphate) with glyceraldehyde 3-phosphate (G3P) to form fructose 1,6-bisphosphate (FBP) in gluconeogenesis and the reverse reaction in glycolysis. This chain is Fructose-bisphosphate aldolase class 2 (fbaA), found in Escherichia coli O157:H7.